A 330-amino-acid chain; its full sequence is Aspartate--ammonia ligase (330 aa).

This sequence belongs to the class-II aminoacyl-tRNA synthetase family. AsnA subfamily.

It localises to the cytoplasm. The enzyme catalyses L-aspartate + NH4(+) + ATP = L-asparagine + AMP + diphosphate + H(+). It functions in the pathway amino-acid biosynthesis; L-asparagine biosynthesis; L-asparagine from L-aspartate (ammonia route): step 1/1. The polypeptide is Aspartate--ammonia ligase (Yersinia enterocolitica serotype O:8 / biotype 1B (strain NCTC 13174 / 8081)).